The following is a 493-amino-acid chain: WAS/WASL-interacting protein family member 1 (493 aa).

Positions 1-14 (MPVPPPPAPPPPPT) are enriched in pro residues. The segment at 1 to 493 (MPVPPPPAPP…GAPPLPPIPR (493 aa)) is disordered. The span at 21–31 (EKPTLNKTEQA) shows a compositional bias: polar residues. The WH2 domain maps to 32–49 (GRNALLSDISKGKKLKKT). R33 carries the post-translational modification Asymmetric dimethylarginine. The interval 45 to 48 (KLKK) is binds actin. A compositionally biased stretch (gly residues) spans 67-105 (ASAGGYGGGGGGGGGGGGGGGGSGGNFGGGGPPGLGGLF). Omega-N-methylarginine is present on residues R126 and R135. 3 stretches are compositionally biased toward pro residues: residues 142–155 (FSPPSGPGRFPAPS), 162–175 (PPEPPRNRMPPPRP), and 183–195 (SLPPPVPNTPRPV). S143 is subject to Phosphoserine. Residue S227 is modified to Phosphoserine. Composition is skewed to pro residues over residues 239-248 (FPRPPLPPTP), 274-290 (VPPPPSQTSKPPVPSTP), and 298-315 (APPPPPPPSRPGPPPLPP). A phosphoserine mark is found at S330 and S340. A compositionally biased stretch (pro residues) spans 336 to 361 (PPLPSPGRSGPLPPPPSERPPPPVRD). XRSGPXPPXP motif repeat units follow at residues 342–351 (GRSGPLPPPP), 364–373 (GRSGPLPPPP), and 400–409 (PRSGPRPPLP). A compositionally biased stretch (pro residues) spans 403–424 (GPRPPLPPDRPGAGAPPPPPPS). Residues 425 to 434 (TSVRNGFQDS) are compositionally biased toward polar residues. The segment covering 470 to 484 (ARNESRSGSNRRERG) has biased composition (basic and acidic residues).

Belongs to the verprolin family. In terms of assembly, binds to WAS within the N-terminal region, at a site distinct from the CDC42-binding site. Binds profilin and actin. Binds to WASL. Interacts with DBNL. Interacts with DBNL. Interacts with FNBP1L (via the SH3 domain).

It is found in the cytoplasmic vesicle. The protein localises to the cytoplasm. Its subcellular location is the cytoskeleton. The protein resides in the cell projection. It localises to the ruffle. In terms of biological role, plays a role in the reorganization of the actin cytoskeleton. Contributes with NCK1 and GRB2 in the recruitment and activation of WASL. May participate in regulating the subcellular localization of WASL, resulting in the disassembly of stress fibers in favor of filopodia formation. Plays a role in the formation of cell ruffles. This Mus musculus (Mouse) protein is WAS/WASL-interacting protein family member 1 (Wipf1).